The primary structure comprises 297 residues: Bifunctional protein FolD (297 aa).

NADP(+) contacts are provided by residues 169-171 (GRS), Ser-196, and Ile-237.

This sequence belongs to the tetrahydrofolate dehydrogenase/cyclohydrolase family. As to quaternary structure, homodimer.

The catalysed reaction is (6R)-5,10-methylene-5,6,7,8-tetrahydrofolate + NADP(+) = (6R)-5,10-methenyltetrahydrofolate + NADPH. The enzyme catalyses (6R)-5,10-methenyltetrahydrofolate + H2O = (6R)-10-formyltetrahydrofolate + H(+). The protein operates within one-carbon metabolism; tetrahydrofolate interconversion. Its function is as follows. Catalyzes the oxidation of 5,10-methylenetetrahydrofolate to 5,10-methenyltetrahydrofolate and then the hydrolysis of 5,10-methenyltetrahydrofolate to 10-formyltetrahydrofolate. The polypeptide is Bifunctional protein FolD (Salinibacter ruber (strain DSM 13855 / M31)).